The chain runs to 192 residues: Transcription termination/antitermination protein NusG (192 aa).

The 29-residue stretch at 140-168 folds into the KOW domain; that stretch reads VGEIVTVTDGPFETFMGTVEEIDQEKNRL.

It belongs to the NusG family.

In terms of biological role, participates in transcription elongation, termination and antitermination. The sequence is that of Transcription termination/antitermination protein NusG from Rickettsia conorii (strain ATCC VR-613 / Malish 7).